A 91-amino-acid polypeptide reads, in one-letter code: UPF0250 protein Pfl01_4965 (91 aa).

This sequence belongs to the UPF0250 family.

This is UPF0250 protein Pfl01_4965 from Pseudomonas fluorescens (strain Pf0-1).